Consider the following 427-residue polypeptide: GTPase ERA-like, chloroplastic (427 aa).

The transit peptide at 1 to 39 directs the protein to the chloroplast; it reads MAVSPHISPTLSRYKFFSTSVVENPNFSPYRIYSRRRVT. The 171-residue stretch at 128 to 298 folds into the Era-type G domain; sequence RSGYVAVVGM…KEWILSKLPF (171 aa). The tract at residues 136 to 143 is G1; that stretch reads GMPNVGKS. 136-143 lines the GTP pocket; the sequence is GMPNVGKS. Residues 162–166 form a G2 region; sequence QTTRH. A G3 region spans residues 183–186; that stretch reads DTPG. GTP-binding positions include 183–187 and 248–251; these read DTPGV and NKKD. Residues 248–251 are G4; the sequence is NKKD. The interval 277 to 279 is G5; the sequence is VSA. Residues 329 to 406 form the KH type-2 domain; that stretch reads YRNEVPYACQ…FLEVEVKVKE (78 aa).

It belongs to the TRAFAC class TrmE-Era-EngA-EngB-Septin-like GTPase superfamily. Era GTPase family.

The protein resides in the plastid. The protein localises to the chloroplast stroma. Its subcellular location is the chloroplast nucleoid. Functionally, nuclear genome-encoded probable GTPase involved in ribosome biogenesis in chloroplasts. Plays a role in 16S rRNA maturation in plastids and may contribute to the assembly of the small (30S) ribosomal subunit. This Arabidopsis thaliana (Mouse-ear cress) protein is GTPase ERA-like, chloroplastic.